A 235-amino-acid polypeptide reads, in one-letter code: Biosynthetic peptidoglycan transglycosylase (235 aa).

The chain crosses the membrane as a helical span at residues 12–34 (GLGKLLLAALLSTIVSVALLRFI).

The protein belongs to the glycosyltransferase 51 family.

It is found in the cell inner membrane. It carries out the reaction [GlcNAc-(1-&gt;4)-Mur2Ac(oyl-L-Ala-gamma-D-Glu-L-Lys-D-Ala-D-Ala)](n)-di-trans,octa-cis-undecaprenyl diphosphate + beta-D-GlcNAc-(1-&gt;4)-Mur2Ac(oyl-L-Ala-gamma-D-Glu-L-Lys-D-Ala-D-Ala)-di-trans,octa-cis-undecaprenyl diphosphate = [GlcNAc-(1-&gt;4)-Mur2Ac(oyl-L-Ala-gamma-D-Glu-L-Lys-D-Ala-D-Ala)](n+1)-di-trans,octa-cis-undecaprenyl diphosphate + di-trans,octa-cis-undecaprenyl diphosphate + H(+). It functions in the pathway cell wall biogenesis; peptidoglycan biosynthesis. Peptidoglycan polymerase that catalyzes glycan chain elongation from lipid-linked precursors. This Aeromonas hydrophila subsp. hydrophila (strain ATCC 7966 / DSM 30187 / BCRC 13018 / CCUG 14551 / JCM 1027 / KCTC 2358 / NCIMB 9240 / NCTC 8049) protein is Biosynthetic peptidoglycan transglycosylase.